A 214-amino-acid polypeptide reads, in one-letter code: Adenylate kinase (214 aa).

10–15 (GAGKGT) serves as a coordination point for ATP. The tract at residues 30 to 59 (STGDMLRAAIKAGTELGKQAKAVIDAGQLV) is NMP. AMP-binding positions include threonine 31, arginine 36, 57-59 (QLV), 85-88 (GFPR), and glutamine 92. Residues 122-159 (GRRAHLPSGRTYHVVYNPPKVEGKDDVTGEDLVVRDDD) form an LID region. Residues arginine 123 and 132–133 (TY) each bind ATP. Arginine 156 and arginine 167 together coordinate AMP. Lysine 200 contacts ATP.

This sequence belongs to the adenylate kinase family. As to quaternary structure, monomer.

It is found in the cytoplasm. The catalysed reaction is AMP + ATP = 2 ADP. Its pathway is purine metabolism; AMP biosynthesis via salvage pathway; AMP from ADP: step 1/1. Catalyzes the reversible transfer of the terminal phosphate group between ATP and AMP. Plays an important role in cellular energy homeostasis and in adenine nucleotide metabolism. This is Adenylate kinase from Vibrio parahaemolyticus serotype O3:K6 (strain RIMD 2210633).